The following is a 1010-amino-acid chain: Lethal(2) giant larvae protein homolog SRO77 (1010 aa).

WD repeat units lie at residues 47-80 (TVTT…VVFT), 87-122 (IKHM…TTVF), 127-163 (ITCI…KLKI), 182-215 (SIQW…KQHF), 240-275 (VIQS…IHAR), 299-364 (AIFK…QKLF), 372-407 (LINF…ETLI), 431-504 (VTTC…FEVN), 518-595 (KNIS…STVI), 602-637 (VSAI…FNEN), 649-700 (VSTV…DATK), 709-763 (GINS…THAL), 768-815 (IATS…KNLR), and 829-852 (SILE…SVLN). A disordered region spans residues 932-958 (SNAARKLPPGTEDHRYARPVRSSGRSN).

It belongs to the WD repeat L(2)GL family. In terms of assembly, interacts with SEC9.

Acts as an allosteric regulator of polarized exocytosis by promoting the targeted fusion of vesicles with the plasma membrane. Involved in maintenance of ion homeostasis in cells exposed to NaCl stress. May be involved in the targeting of the myosin proteins to their intrinsic pathways. Multicopy suppressor of RHO3. May also participate in the maintenance of cell polarity and bud growth. The polypeptide is Lethal(2) giant larvae protein homolog SRO77 (SRO77) (Saccharomyces cerevisiae (strain ATCC 204508 / S288c) (Baker's yeast)).